We begin with the raw amino-acid sequence, 469 residues long: Probable lysophospholipase BODYGUARD 1 (469 aa).

The N-terminal stretch at 1-45 (MGFSRSLNRTVGVFVFFILDIVDFLLCFTYKTLDFFFESEWKPCY) is a signal peptide. Cysteine 46 carries the N-palmitoyl cysteine lipid modification. The region spanning 185 to 439 (VVFIHGFLSS…IHVVPDKDHI (255 aa)) is the AB hydrolase-1 domain. Histidine 189 is an active-site residue. Catalysis depends on serine 263, which acts as the Nucleophile. Residues aspartate 410 and histidine 438 each act as charge relay system in the active site.

Expressed exclusively in protodermal and epidermal cells of all organs, especially on adaxial sides.

It localises to the cell membrane. The protein resides in the secreted. It is found in the cell wall. Functionally, controls cuticle development and morphogenesis, by promoting cutin and suberin monomers loading. Involved in the regulation of abscissic acid (ABA) biosynthesis in response to osmotic stress. Plays an important role in osmotic stress and drought resistance. Required to ensure a reduced permeability of aerial tissue, thus preventing transpiration. Regulates lateral root hair development. In terms of biological role, required for infection by the pathogenic necrotrophic fungus Botrytis cinerea, probably by regulating structural traits of the cuticle. The chain is Probable lysophospholipase BODYGUARD 1 from Arabidopsis thaliana (Mouse-ear cress).